Consider the following 449-residue polypeptide: MRYLPLTEADRQAMLARIGVPDVDALFRDVPQAARLTAPIDGLPLHMGELEVDRLLSGMAAKNLTAGSVPSFLGAGAYRHHVPASVDQMLLRGEFLTSYTPYQPEVAQGTLQYLFEFQTQVAEITGMEVANASMYDGATGTAEAVLMATRLTRRSKAVLSGGLHPHYREVVATTCGVLGMEVAAQAPDPTDAEDLLPLVDDATACVVVQTPSLFGHPRDLSELAAACHAKGALLIAVVTEVVSLGLLTPPGRMGADIVVCEGQSIGNPLNFGGPHVGLFATREKFVRQMPGRLCGQTADAEGKRGFVLTLSTREQHIRREKATSNICTNSGLCALAFTIHMALLGGEGFARLARLNHAKAVTLADRLAAVPGVEVLNGAFFNEFTLRLPRPAAPVVEALAQRRILAGVPVSRLYPGEAGLETLLLVAATETNTEADMDALVHGLQEVLR.

It belongs to the GcvP family. N-terminal subunit subfamily. In terms of assembly, the glycine cleavage system is composed of four proteins: P, T, L and H. In this organism, the P 'protein' is a heterodimer of two subunits.

It carries out the reaction N(6)-[(R)-lipoyl]-L-lysyl-[glycine-cleavage complex H protein] + glycine + H(+) = N(6)-[(R)-S(8)-aminomethyldihydrolipoyl]-L-lysyl-[glycine-cleavage complex H protein] + CO2. In terms of biological role, the glycine cleavage system catalyzes the degradation of glycine. The P protein binds the alpha-amino group of glycine through its pyridoxal phosphate cofactor; CO(2) is released and the remaining methylamine moiety is then transferred to the lipoamide cofactor of the H protein. The sequence is that of Probable glycine dehydrogenase (decarboxylating) subunit 1 from Rhodospirillum centenum (strain ATCC 51521 / SW).